The primary structure comprises 310 residues: Methionyl-tRNA formyltransferase (310 aa).

Residue 109 to 112 participates in (6S)-5,6,7,8-tetrahydrofolate binding; that stretch reads SLLP.

It belongs to the Fmt family.

It carries out the reaction L-methionyl-tRNA(fMet) + (6R)-10-formyltetrahydrofolate = N-formyl-L-methionyl-tRNA(fMet) + (6S)-5,6,7,8-tetrahydrofolate + H(+). In terms of biological role, attaches a formyl group to the free amino group of methionyl-tRNA(fMet). The formyl group appears to play a dual role in the initiator identity of N-formylmethionyl-tRNA by promoting its recognition by IF2 and preventing the misappropriation of this tRNA by the elongation apparatus. The sequence is that of Methionyl-tRNA formyltransferase from Pseudomonas paraeruginosa (strain DSM 24068 / PA7) (Pseudomonas aeruginosa (strain PA7)).